A 659-amino-acid polypeptide reads, in one-letter code: Zinc finger protein 304 (659 aa).

The 75-residue stretch at 14 to 88 (VTFEDVFVYF…TAESGLFQKA (75 aa)) folds into the KRAB domain. 16 consecutive C2H2-type zinc fingers follow at residues 89-111 (HPCE…QGSH), 115-139 (KLCT…QKQH), 251-273 (FRCL…RKIH), 279-301 (HVCK…QKFH), 307-329 (YTCS…QRVH), 335-357 (YDCS…QRIH), 363-385 (YKCN…QRFH), 391-413 (YECS…WRIH), 419-441 (YECI…RRVH), 447-469 (YVCS…QIIH), 475-497 (YECS…QKIH), 503-525 (YECG…QRIH), 531-553 (YECN…QRVH), 559-581 (YVCS…KKVH), 587-609 (YECS…QRVH), and 615-637 (YVCS…QKAH).

This sequence belongs to the krueppel C2H2-type zinc-finger protein family. As to quaternary structure, probably part of a corepressor complex containing ZNF304, TRIM28, SETDB1 and DNMT1; leading to promoter hypermethylation and transcriptional silencing. Probably associates with Polycomb group (PcG) complexes; leading to trimethylation of 'Lys-27' of histone H3 (H3K27me3). Interacts with USP28. Deubiquitinated by USP28; the deubiquitination leads to the stabilization of ZNF304 from proteolytic degradation. Expressed in undifferentiated embryonic stem cells (ESCs). Expressed strongly in colorectal cancers cells (CRCs). Expressed strongly in ovarian carcinoma (OC) tumor cell lines compared to non-transformed ovarian epithelial cells (at protein level). Expressed in lymphoid tissues, thyroid, adrenal gland, prostate, pancreas and skeletal muscles.

It is found in the nucleus. Acts as a transcriptional regulator and plays a role in gene silencing. Probably forms a corepressor complex required for activated KRAS-mediated promoter hypermethylation and transcriptional silencing of several tumor suppressor genes (TSGs) or other tumor-related genes in colorectal cancer (CRC) cells. Also required to maintain a transcriptionally repressive state of genes in undifferentiated embryonic stem cells (ESCs) by inducing trimethylation of 'Lys-27' of histone H3 (H3K27me3) in a Polycomb group (PcG) complexes-dependent manner. Associates at promoter regions of TSGs and mediates the recruitment of the corepressor complex containing the scaffolding protein TRIM28, methyltransferase DNMT1 and histone methyltransferase SETDB1 and/or the PcG complexes at those sites. Transcription factor involved in the metastatic cascade process by inducing cell migration and proliferation and gain resistance to anoikis of ovarian carcinoma (OC) cells via integrin-mediated signaling pathways. Associates with the ITGB1 promoter and positively regulates beta-1 integrin transcription expression. Promotes angiogenesis. Promotes tumor growth. This Homo sapiens (Human) protein is Zinc finger protein 304.